Reading from the N-terminus, the 228-residue chain is Early nodulin-like protein 18 (228 aa).

A signal peptide spans methionine 1 to alanine 26. Residues lysine 28 to histidine 148 enclose the Phytocyanin domain. Residues asparagine 29, asparagine 71, asparagine 94, and asparagine 145 are each glycosylated (N-linked (GlcNAc...) asparagine). An intrachain disulfide couples cysteine 86 to cysteine 136. The disordered stretch occupies residues histidine 148–threonine 211. Low complexity predominate over residues proline 153 to serine 170. Residues aspartate 188–serine 204 show a composition bias toward basic and acidic residues. The GPI-anchor amidated serine moiety is linked to residue serine 204. The propeptide at lysine 205 to phenylalanine 228 is removed in mature form.

It belongs to the early nodulin-like (ENODL) family. Mostly expressed in seedlings, roots and flowers, and, to a lower extent, in leaves, stems and seeds.

Its subcellular location is the cell membrane. May act as a carbohydrate transporter. The protein is Early nodulin-like protein 18 of Arabidopsis thaliana (Mouse-ear cress).